A 123-amino-acid polypeptide reads, in one-letter code: Small ribosomal subunit protein uS12 (123 aa).

D89 is subject to 3-methylthioaspartic acid.

The protein belongs to the universal ribosomal protein uS12 family. As to quaternary structure, part of the 30S ribosomal subunit. Contacts proteins S8 and S17. May interact with IF1 in the 30S initiation complex.

Functionally, with S4 and S5 plays an important role in translational accuracy. In terms of biological role, interacts with and stabilizes bases of the 16S rRNA that are involved in tRNA selection in the A site and with the mRNA backbone. Located at the interface of the 30S and 50S subunits, it traverses the body of the 30S subunit contacting proteins on the other side and probably holding the rRNA structure together. The combined cluster of proteins S8, S12 and S17 appears to hold together the shoulder and platform of the 30S subunit. The sequence is that of Small ribosomal subunit protein uS12 from Granulibacter bethesdensis (strain ATCC BAA-1260 / CGDNIH1).